We begin with the raw amino-acid sequence, 141 residues long: Hemoglobin subunit alpha-A (141 aa).

Residues 1 to 141 (VLSAADKANV…VGAVLTAKYR (141 aa)) form the Globin domain. His-58 is a binding site for O2. His-87 lines the heme b pocket.

It belongs to the globin family. As to quaternary structure, heterotetramer of two alpha chains and two beta chains. Red blood cells.

Functionally, involved in oxygen transport from the lung to the various peripheral tissues. The sequence is that of Hemoglobin subunit alpha-A (HBAA) from Chloephaga melanoptera (Andean goose).